A 596-amino-acid polypeptide reads, in one-letter code: Delta(24(24(1)))-sterol reductase (596 aa).

The interval 1 to 122 (MSSRYSLRQT…GHATNGHATS (122 aa)) is disordered. Over residues 98 to 112 (NGNGNGYTNGHGNGN) the composition is skewed to gly residues. 8 helical membrane passes run 168-188 (FGTA…WIGA), 225-245 (VWAW…LLPG), 269-289 (WSLY…IWPL), 296-316 (FGPL…VAYF), 353-373 (MFFE…GTAA), 381-401 (YVSG…NACA), 419-439 (GFML…HCTI), and 454-474 (GILA…DSCN). NADP(+) is bound by residues K477, R481, L516, and 528 to 529 (HY). A helical membrane pass occupies residues 535–557 (FAVSWGLITGFESPFPWFYPVFF). Residues D568, 572–576 (CRRKY), and Y583 each bind NADP(+).

The protein belongs to the ERG4/ERG24 family.

The protein resides in the endoplasmic reticulum membrane. The enzyme catalyses ergosterol + NADP(+) = ergosta-5,7,22,24(28)-tetraen-3beta-ol + NADPH + H(+). It functions in the pathway steroid metabolism; ergosterol biosynthesis. Delta(24(24(1)))-sterol reductase; part of the third module of ergosterol biosynthesis pathway that includes the late steps of the pathway. ERG4 catalyzes the last step of ergosterol biosynthesis by converting ergosta-5,7,22,24(28)-tetraen-3beta-ol into ergosterol. The third module or late pathway involves the ergosterol synthesis itself through consecutive reactions that mainly occur in the endoplasmic reticulum (ER) membrane. Firstly, the squalene synthase ERG9 catalyzes the condensation of 2 farnesyl pyrophosphate moieties to form squalene, which is the precursor of all steroids. Squalene synthase is crucial for balancing the incorporation of farnesyl diphosphate (FPP) into sterol and nonsterol isoprene synthesis. Secondly, squalene is converted into lanosterol by the consecutive action of the squalene epoxidase ERG1 and the lanosterol synthase ERG7. Then, the delta(24)-sterol C-methyltransferase ERG6 methylates lanosterol at C-24 to produce eburicol. Eburicol is the substrate of the sterol 14-alpha demethylase encoded by CYP51A, CYP51B and CYP51C, to yield 4,4,24-trimethyl ergosta-8,14,24(28)-trienol. CYP51B encodes the enzyme primarily responsible for sterol 14-alpha-demethylation, and plays an essential role in ascospore formation. CYP51A encodes an additional sterol 14-alpha-demethylase, induced on ergosterol depletion and responsible for the intrinsic variation in azole sensitivity. The third CYP51 isoform, CYP51C, does not encode a sterol 14-alpha-demethylase, but is required for full virulence on host wheat ears. The C-14 reductase ERG24 then reduces the C14=C15 double bond which leads to 4,4-dimethylfecosterol. A sequence of further demethylations at C-4, involving the C-4 demethylation complex containing the C-4 methylsterol oxidases ERG25, the sterol-4-alpha-carboxylate 3-dehydrogenase ERG26 and the 3-keto-steroid reductase ERG27, leads to the production of fecosterol via 4-methylfecosterol. ERG28 has a role as a scaffold to help anchor ERG25, ERG26 and ERG27 to the endoplasmic reticulum. The C-8 sterol isomerase ERG2 then catalyzes the reaction which results in unsaturation at C-7 in the B ring of sterols and thus converts fecosterol to episterol. The sterol-C5-desaturases ERG3A and ERG3BB then catalyze the introduction of a C-5 double bond in the B ring to produce 5-dehydroepisterol. The C-22 sterol desaturases ERG5A and ERG5B further convert 5-dehydroepisterol into ergosta-5,7,22,24(28)-tetraen-3beta-ol by forming the C-22(23) double bond in the sterol side chain. Finally, ergosta-5,7,22,24(28)-tetraen-3beta-ol is substrate of the C-24(28) sterol reductase ERG4 to produce ergosterol. The protein is Delta(24(24(1)))-sterol reductase of Gibberella zeae (strain ATCC MYA-4620 / CBS 123657 / FGSC 9075 / NRRL 31084 / PH-1) (Wheat head blight fungus).